We begin with the raw amino-acid sequence, 189 residues long: Large ribosomal subunit protein uL13 (189 aa).

This sequence belongs to the universal ribosomal protein uL13 family.

The polypeptide is Large ribosomal subunit protein uL13 (rpl13a) (Salmo trutta (Brown trout)).